Here is a 66-residue protein sequence, read N- to C-terminus: Large ribosomal subunit protein uL29 (66 aa).

Belongs to the universal ribosomal protein uL29 family.

This chain is Large ribosomal subunit protein uL29, found in Borreliella afzelii (strain PKo) (Borrelia afzelii).